The sequence spans 436 residues: 3-ketoacyl-CoA thiolase (436 aa).

Cys-99 functions as the Acyl-thioester intermediate in the catalytic mechanism. Catalysis depends on proton acceptor residues His-392 and Cys-422.

The protein belongs to the thiolase-like superfamily. Thiolase family. In terms of assembly, heterotetramer of two alpha chains (FadJ) and two beta chains (FadI).

It localises to the cytoplasm. The catalysed reaction is an acyl-CoA + acetyl-CoA = a 3-oxoacyl-CoA + CoA. Its pathway is lipid metabolism; fatty acid beta-oxidation. In terms of biological role, catalyzes the final step of fatty acid oxidation in which acetyl-CoA is released and the CoA ester of a fatty acid two carbons shorter is formed. The protein is 3-ketoacyl-CoA thiolase of Escherichia coli (strain SMS-3-5 / SECEC).